Reading from the N-terminus, the 257-residue chain is UPF0246 protein ASA_3634 (257 aa).

The protein belongs to the UPF0246 family.

The sequence is that of UPF0246 protein ASA_3634 from Aeromonas salmonicida (strain A449).